We begin with the raw amino-acid sequence, 374 residues long: Putative 2,3-diketo-5-methylthiopentyl-1-phosphate enolase (374 aa).

Residues lysine 138, 164 to 167, histidine 255, glycine 327, and 349 to 350 contribute to the substrate site; these read QDDE and GG. A Mg(2+)-binding site is contributed by aspartate 166.

This sequence belongs to the RuBisCO large chain family. Type IV subfamily. In terms of assembly, homodimer. Mg(2+) is required as a cofactor.

It catalyses the reaction 5-methylsulfanyl-2,3-dioxopentyl phosphate = 2-hydroxy-5-methylsulfanyl-3-oxopent-1-enyl phosphate. The protein operates within amino-acid biosynthesis; L-methionine biosynthesis via salvage pathway; L-methionine from S-methyl-5-thio-alpha-D-ribose 1-phosphate: step 3/6. Functionally, catalyzes the enolization of 2,3-diketo-5-methylthiopentyl-1-phosphate (DK-MTP-1-P) into 2-hydroxy-3-keto-5-methylthiopentenyl-1-phosphate (HK-MTPenyl-1-P). The chain is Putative 2,3-diketo-5-methylthiopentyl-1-phosphate enolase (mtnW) from Shouchella clausii (strain KSM-K16) (Alkalihalobacillus clausii).